Here is a 192-residue protein sequence, read N- to C-terminus: Transcription antitermination protein NusB (192 aa).

This sequence belongs to the NusB family.

Functionally, involved in transcription antitermination. Required for transcription of ribosomal RNA (rRNA) genes. Binds specifically to the boxA antiterminator sequence of the ribosomal RNA (rrn) operons. This Lactococcus lactis subsp. lactis (strain IL1403) (Streptococcus lactis) protein is Transcription antitermination protein NusB.